We begin with the raw amino-acid sequence, 543 residues long: ATP-dependent ubiquitin transferase-like protein Cap2 (543 aa).

An E2-like domain region spans residues 1–159; sequence MSSAAAVADV…QNCIVAHANG (159 aa). The active-site For E2-like domain is Cys-84. The interval 160–305 is linker domain; it reads CPLWFITDNE…YLAQRNMPNS (146 aa). Residues 306-543 form an adenylation plus E1-like domain region; sequence KTLAGKNIAV…RDRECPLCNS (238 aa). Residues Cys-450 and Cys-453 each act as for E1-like domain in the active site.

It in the C-terminal section; belongs to the HesA/MoeB/ThiF family. In terms of assembly, forms a Cap2-CdnA complex. A Cap2 dimer is bound on either side by a CdnA monomer.

CD-NTase priming component of a CBASS antiviral system. CBASS (cyclic oligonucleotide-based antiphage signaling system) provides immunity against bacteriophages. The CD-NTase protein (CdnA) synthesizes cyclic nucleotides in response to infection; these serve as specific second messenger signals. The signals activate a diverse range of effectors, leading to bacterial cell death and thus abortive phage infection. A type II-A(GA) CBASS system. In terms of biological role, acts as a protein transferase, conjugating CdnA, the CD-NTase, to unidentified target(s) in the cell probably via an E1-E2 ubiquitin transferase-like mechanism. This primes CdnA, upon phage infection CdnA activates and makes cyclic nucleotides. Protein conjugation requires ATP. Functionally, the capV-cdnA-cap2-cap3 operon provides about 10(4)-fold protection in strain BWHPSA011 against infection by phage PaMx41. In P.aeruginosa strain PAO1 it confers protection against phages PaMx41 and JBD18 but not JBD67 (JBD18 and JBD67 do not replicate in BWHPSA011 / Pa011). When acb2 in JBD67 is deleted this CBASS operon then protects against JDB67 also. This CBASS system limits prophage induction of lysogenized JBD67 as well as viral lytic replication. In Pseudomonas aeruginosa (strain BWHPSA011 / Pa011), this protein is ATP-dependent ubiquitin transferase-like protein Cap2.